The chain runs to 558 residues: Potassium-transporting ATPase potassium-binding subunit (558 aa).

12 helical membrane passes run 1-21 (MSIV…SRYL), 60-80 (IKHF…LLLI), 129-149 (VITF…IAML), 169-189 (FIVR…ISQG), 246-266 (WSNY…VFLF), 281-301 (IMIF…CLYF), 326-346 (FGIG…TGTV), 353-373 (LTPL…VFGG), 376-396 (VGLM…SLMI), 415-435 (IALS…LAFI), 485-505 (IVML…VSSL), and 523-543 (LFFS…TFLP).

The protein belongs to the KdpA family. In terms of assembly, the system is composed of three essential subunits: KdpA, KdpB and KdpC.

The protein localises to the cell membrane. Its function is as follows. Part of the high-affinity ATP-driven potassium transport (or Kdp) system, which catalyzes the hydrolysis of ATP coupled with the electrogenic transport of potassium into the cytoplasm. This subunit binds the extracellular potassium ions and delivers the ions to the membrane domain of KdpB through an intramembrane tunnel. This chain is Potassium-transporting ATPase potassium-binding subunit, found in Staphylococcus haemolyticus (strain JCSC1435).